A 185-amino-acid polypeptide reads, in one-letter code: Ribosome-recycling factor (185 aa).

The protein belongs to the RRF family.

Its subcellular location is the cytoplasm. In terms of biological role, responsible for the release of ribosomes from messenger RNA at the termination of protein biosynthesis. May increase the efficiency of translation by recycling ribosomes from one round of translation to another. The polypeptide is Ribosome-recycling factor (Shewanella baltica (strain OS223)).